The chain runs to 1399 residues: MNQEIMNLFNPTTPAQVFDQIRISIASPEKILSWSYGEIKKPETINYRTFKPERDGLFCARIFGPIKDYECLCGKYKRMKYKGIICEKCSVEVTLSRVRRERMGHIELAAPVAHIWFLKSLPSRIGLLLDMTLKDLERILYFEYYVVLEPGLTALKDRQLLSEDEYLKAQDEYGQDSFTAMIGAEAIRELLRGLELEKLEQTLRAEMQETDSDIKHKKLAKRLKIVEAFRHSGNKPEWMIMTVVPVIPPDLRPLVPLDGGRFATSDLNDLYRRVINRNNRLKRLMELRAPDIIIRNEKRMLQEAVDALFDNGRRGRVITGANKRPLKSLADMLKGKQGRFRQNLLGKRVDYSGRSVIVVGPELRLHQCGLPKKMALELFKPFIYSRLDAKGLSTTVKQAKKLVEKERPEVWDILDEVIREHPVLLNRAPTLHRLGIQAFEPVLIEGKAIQLHPLVCSAFNADFDGDQMAVHVPLSLEAQLEARVLMMSTNNILHPANGQPIIVPSQDIVLGLYYVSIMREGMPGQGMTFGNMAELEHALHAKAIHLHSKIKYRWEGMNEEGKIAKRWIETTAGRVMLGNLLPKHPRVTFEVINKLMTKREISGVIDQVYRHCGQKETVIFCDRIMALGFYNAFKAGISFGKDDMVVPAGKWKIVDTTRTLAKDFEQQYNDGLITHGEKYNKVVDAWSKASEEIAKEMMKEISVTKKTATGADADINSIYMMSHSGARGSPAQMRQLAGMRGLMAKPSGEIIETPIISNFKEGLSVLEYFNSTHGARKGLADTALKTANSGYLTRRLVDVAQDCIITQDDCGTHLGIKMRAIVDAGTLVASLGSRILGRVPCDDVRDPATNAVLVKAGTLMEESHIDAIQQAGVQEVKIRSALTCELVNGICKMCYGRDLARGTPVNHGEAVGVIAAQSIGEPGTQLTMRTFHIGGAAQLNEQSFVESNFEGKVVIRNKAIARNSEGHLIAMVRNMVVTIVDPDGTERATHRIQYGSRMHVDDGDMIKRGQRIAEWDPYTRPILTEAEGTIGFEDLTEGLSISETLDESTGIAKRVVIDWRGTRGGADLRPAIVIKGKDGKVLKLARGGDARYMLSVDAILSVDIGATVKPGDILARISTESAKTRDITGGLPRVAELFEARKPKDAAIIAEIAGTIRFGRDYKNKRRISIEPVDKTEEAREYLIPKGKHIHLQDGDIVEKGDFIVEGNPAPHDILAIKGIEELAAYLVNEIQEVYRLQGVLINDKHIEVIVRQMLQKIEVTDQGDTDMIAGEQVDKIEFDALNAKAQEEGKKPASGNPVLLGITKASLQTRSFFSAASFQETTRVLTEAAVNGKIDPLEGLKENVIVGRLIPAGTGASMARIREVALKRDKLILDEREKQAAIVPSQPEPQPLALPPAE.

4 residues coordinate Zn(2+): C71, C73, C86, and C89. Residues D462, D464, and D466 each coordinate Mg(2+). Positions 810, 884, 891, and 894 each coordinate Zn(2+). A disordered region spans residues 1379–1399; it reads KQAAIVPSQPEPQPLALPPAE. The segment covering 1387–1399 has biased composition (pro residues); sequence QPEPQPLALPPAE.

It belongs to the RNA polymerase beta' chain family. In terms of assembly, the RNAP catalytic core consists of 2 alpha, 1 beta, 1 beta' and 1 omega subunit. When a sigma factor is associated with the core the holoenzyme is formed, which can initiate transcription. It depends on Mg(2+) as a cofactor. The cofactor is Zn(2+).

The enzyme catalyses RNA(n) + a ribonucleoside 5'-triphosphate = RNA(n+1) + diphosphate. DNA-dependent RNA polymerase catalyzes the transcription of DNA into RNA using the four ribonucleoside triphosphates as substrates. This is DNA-directed RNA polymerase subunit beta' from Bradyrhizobium sp. (strain ORS 278).